The chain runs to 144 residues: 3-hydroxyacyl-[acyl-carrier-protein] dehydratase FabZ (144 aa).

His-47 is an active-site residue.

It belongs to the thioester dehydratase family. FabZ subfamily.

Its subcellular location is the cytoplasm. The enzyme catalyses a (3R)-hydroxyacyl-[ACP] = a (2E)-enoyl-[ACP] + H2O. Its function is as follows. Involved in unsaturated fatty acids biosynthesis. Catalyzes the dehydration of short chain beta-hydroxyacyl-ACPs and long chain saturated and unsaturated beta-hydroxyacyl-ACPs. This is 3-hydroxyacyl-[acyl-carrier-protein] dehydratase FabZ from Nitrosomonas eutropha (strain DSM 101675 / C91 / Nm57).